Reading from the N-terminus, the 131-residue chain is NADPH-dependent 7-cyano-7-deazaguanine reductase (131 aa).

Cys47 (thioimide intermediate) is an active-site residue. Asp54 (proton donor) is an active-site residue. Substrate contacts are provided by residues 69 to 71 (MEL) and 88 to 89 (HE).

Belongs to the GTP cyclohydrolase I family. QueF type 1 subfamily.

Its subcellular location is the cytoplasm. It catalyses the reaction 7-aminomethyl-7-carbaguanine + 2 NADP(+) = 7-cyano-7-deazaguanine + 2 NADPH + 3 H(+). It functions in the pathway tRNA modification; tRNA-queuosine biosynthesis. In terms of biological role, catalyzes the NADPH-dependent reduction of 7-cyano-7-deazaguanine (preQ0) to 7-aminomethyl-7-deazaguanine (preQ1). In Microcystis aeruginosa (strain NIES-843 / IAM M-2473), this protein is NADPH-dependent 7-cyano-7-deazaguanine reductase.